Reading from the N-terminus, the 57-residue chain is Large ribosomal subunit protein bL32 (57 aa).

The protein belongs to the bacterial ribosomal protein bL32 family.

The protein is Large ribosomal subunit protein bL32 (rpmF) of Halalkalibacterium halodurans (strain ATCC BAA-125 / DSM 18197 / FERM 7344 / JCM 9153 / C-125) (Bacillus halodurans).